Reading from the N-terminus, the 90-residue chain is Small ribosomal subunit protein bS16 (90 aa).

The protein belongs to the bacterial ribosomal protein bS16 family.

This Anoxybacillus flavithermus (strain DSM 21510 / WK1) protein is Small ribosomal subunit protein bS16.